We begin with the raw amino-acid sequence, 3461 residues long: MATRRAGRSWEVSPTERRPSARPRNSAAEEAAASPPVLSLSHFCRSPFLCFGDVRLGASRTLPLALDNPNEEVAEVKIAHFPAAEQGFSISPRSFELQPKEKIIISVNWTPLKEGRVREIVTFLVNDILKHQAILLGNAEEKKKKKRSLWDTINKKKMSTSSSDKRNSYIQNVNTTFCVSQKADRVRSPLQACENLAMKEGCFLTENNSLSLEENKIPISPISPIFKECHGETSLPLSVRRSTTYTSLHACENGELLKVEGADGSEDFNFNEKVTSETSFSSIHNMSGQIEENSKLILTPTCCSTLNITQSQGNFLSPDSFVNNSHAANNEPEVATCLSLDTFRKDNSSPVHLESKTVHKTYRTILSPDSFINDNYGLNQDLEPESINPILSPNQFVKDNMAYICISQQTCKLSSLSNKNSQVSQSPQDQRTNGVLPCFRECQGSQSPEAIFEESRTLEMKSDCYSFTKNQPKFPVIQNISSYSHDKRTRRPILSATVTKSKSICSRENQTEANKPKAKRCLNSVAGEFEKPTDTQNEKSGFQSCLPVIDPVFSKSKSYKNAVIPSSKTALVARKRKSEGNKEDANVRVTVTEHTEVREIKRIHFSPVESKMATVKKTKKMITPISKHISYREKSNLRKKTDSLVYRTPHSKTNKRTKPVVAVAQSTLTFIKPLKTDIPRHPMPFAAKNMFYDERWKEKQEQGFTWWLNFILTPDDFTVKTNISEVNAATLLLGVESQHKISVARAPTKDEMSLRAYTARCRLNRLRRAACRLFTSENMVKAIKKLEIEIEARRLIVRKDRHLWKDVGERQKVLNWLLSYNPLWLRIGLETIYGELISLEDNSDVTGLAVFILNRLLWNPDIAAEYRHPSVPHLYRDGHEEALSKFTLKKLLLLVCFLDYAKISRLIDHDPCLFCKDAEFKTSKEILLAFSRDFLSGEGDLSRHLSFLGLPVNHVQTPFDEFDFAVTNLAVDLQCGVRLVRIMELLTRDWNLSKKLRIPAISRLQKMHNVDIVLQILRSRGIQLNDEHGNAILSKDIVDRHREKTLTLLWKIAFAFQVDISLNLDQLKEEIDFLKHTQSLKKTTSALSCHSDAIINKEKDKRNSGSFERYSESIKLLMDWVNAVCAFYNKKVENFTVSFSDGRVLCYLIHHYHPYYVPFDAICQRTTQTVECTQTGSVVLNSSSESDGSSLDLSLKALDHENTSELYKELLENEKRNFQLVRSAVRDLGGIPAMIHHSDMSNTIPDEKVVITYLSFLCARLLDLCKETRAARLIQTTWRKYKQKTDLKRHQERDKAARIIQSAVISFLSKQRLKKEINAALAIQKHWRRLLAQRKLLMLKKEKLEKVQNKSALVIQRYWRRYSTRKQFLKLKYYSVILQSRIRMILAVTSYKRYLWATVTIQRHWLAYLRRKRDQQRYEMLKSSCLIIQSVFRRWKQHKMRLQIKATIILQRAFREWHVRKRAKEEKSAVVIQSWYRMHKELRKYIHLRSCVVIIQTRFRCLQAQKSYKRRREAILTIQKFYRAHLKGKTERANYLQKRAAAIQLQAAFRGMKARNLHRQIRAACVFQSYWRMRRDRFRFLNLKKITIKLQAQVRMHQQLQKYKKIKKAALIIQIHLRASVLAKRALASYQKTRSAVIVLQSAYRGMQARRKFIHILTSIIKIQSYYRAYISRKKFLRLKHATVKLQSIVKMKQTRKQYLHLRAATLFIQQWYRSIKVAALKREEYVQMRESCIKLQAFVRGHLVRKQMRSQRKAAVSLQSYFRMRKMRQHYLEMYKAAVVIQNYYRAYKAQVSQRKNFLQVKRAVTCVQAAYRGYKVRQLIKQQSIAALKIQTAFRGYSKRKKYQYVLQSTIKIQTWYRTYRTVRDVRMQFLKTKAAVISLQSAYRGWKVRTQIRRELQAAVRIQSAFRMAQTQKQFRLFKTAALVIQQHLRAWSAGKKQRMEYTELRNAALMLQSTWKGKIVRRQIRKQHKCAVIIQSYYRMHVQQKKWDIMKKAARLIQMYYRAYRIGRRQRQLYLKTKAAIVIIQSAYRSMRVRKKIKEYNKAAVAIQSTYRAYKAKKNYATYRASAVLIQRWYRNIKIANRQRKEYLNLKKTAVKIQAVFRGIRVRRRIQHMHTAATFIKAMFKMHQAKVRYHKMRTAAVLIQVRYRAYCQGKIQRAKYLTILKAVTVLQASFRGVRVRQTLRKMQNAAIRIQSCYRRYRQQTYFNKLKKVTQTVQQRYRAVKERNVQFQRYNKLRHSAICIQAGFRGMKARRHLRMMHLAATLIQRRFRTLKMRRRFLSLRKTALWVQRKYRATVCAKHHLQQFLRLQKAVITLQSSYRGWVVRKKMQEMHRAATVIQAAFRMHRAHVRYQAVRQASVVIQQRHQANRAAKLQRQRYLRQRHSALILQAAFRSMKARRHLKMMHSSAVLIQSRFRGLVVRKRFVSLKKAAVFVQRRYRATTCARRHLHQFLKVQKAVITIQSSYRRLMAKKKVQAMHRAAALIQATYKMHRTYVTFQAWKHASILIQQHYRIYRAAKLQRENYVRQRHSALVIQAAYKGMKARQLLREKHRAAIIIQSTYRMYRQYLFYRKIQWATKVIQKIYRAKKRKALQHDALRKVAACVQADFQDMIIRKQIQEQHQAATVLQKHLKASKVRKHYLHFRAKVVFVQRRYRALSAVRTQAVICIQSSYRGFKVRKGIQRMHLAATLIQSLYRMHRAKLDYRAKKTAVVLIQYYYRSYVRVKTERKNFLALQKSVRIIQAAFRGMKVRQKLKNLSEAKMAAIEKRSAFCRHRTETPYEAVQSSALRIQKWHRASLVACSQEAECHSQGRAAVTIQKAFCKTATEILETQKHAALRIQSFLQMAVYRRRFVQQKRAAVTLQQYFRTWQARKQFLLYRKAASVLQNHHRGFLSAKPQREAYLHVRSSVIIIQARTRGFIQKRKFQKIKDSTIKIQAAWRSYKARKYLCKVKAACKIQAWYRSWKARKEYLAILKAVKVIQGCFYTKLERTRFLNMRASTIIIQRKWRAMLSGRIAHEHFLMIKRHQAACLIQANFRRYKGRQVFLRQKSAALTIQRYIRARKAGKCERIKYVELKKSTVVLQALVRGWLVRKRISEQRTKIRLLHFTAAAYCHLSALRIQRAYKLHMVMKNAKKQVNSVICVQRWFRTRLQQKRFAQKCHSVIKSQRELQEHMSQQNRAASVIQKAVRRFLLRKKKEKINNGITKIQALWRGYSWRKKNDGTKIKAIRLSLQLVNREIREENKLYKRTALALHCLLTYKHLSAILEALKHLEVVTRLSPLCCENMAQSGAVSKIFVLIRSCNRSVPCMEVIRYSVQVLLNVAKYEKTTAAVYHVENCIDTLLDLLQMYREKPGDKVADKGGSIFTKTCCLLAILLKTTNRASDVRSRSKVVDRIYSLYKLTARKHKMNTERILYTQKKNSSISIPFIPETPIRTRIVSRLKPDWVLRRDNMEEIT.

A disordered region spans residues 1-30 (MATRRAGRSWEVSPTERRPSARPRNSAAEE). 6 positions are modified to phosphoserine: serine 279, serine 282, serine 367, serine 392, serine 426, and serine 606. One can recognise a Calponin-homology (CH) 1 domain in the interval 921–1057 (KTSKEILLAF…LLWKIAFAFQ (137 aa)). Residues 1058-1077 (VDISLNLDQLKEEIDFLKHT) adopt a coiled-coil conformation. Serine 1104 is modified (phosphoserine). The Calponin-homology (CH) 2 domain occupies 1111–1262 (SESIKLLMDW…YLSFLCARLL (152 aa)). 42 consecutive IQ domains span residues 1267–1296 (ETRAARLIQTTWRKYKQKTDLKRHQERDKA), 1348–1379 (QNKSALVIQRYWRRYSTRKQFLKLKYYSVILQ), 1488–1517 (LRSCVVIIQTRFRCLQAQKSYKRRREAILT), 1511–1540 (RREAILTIQKFYRAHLKGKTERANYLQKRA), 1538–1569 (KRAAAIQLQAAFRGMKARNLHRQIRAACVFQS), 1583–1614 (LKKITIKLQAQVRMHQQLQKYKKIKKAALIIQ), 1633–1662 (TRSAVIVLQSAYRGMQARRKFIHILTSIIK), 1656–1685 (ILTSIIKIQSYYRAYISRKKFLRLKHATVK), 1729–1758 (MRESCIKLQAFVRGHLVRKQMRSQRKAAVS), 1752–1783 (QRKAAVSLQSYFRMRKMRQHYLEMYKAAVVIQ), 1775–1804 (MYKAAVVIQNYYRAYKAQVSQRKNFLQVKR), 1802–1831 (VKRAVTCVQAAYRGYKVRQLIKQQSIAALK), 1825–1854 (QSIAALKIQTAFRGYSKRKKYQYVLQSTIK), 1875–1904 (TKAAVISLQSAYRGWKVRTQIRRELQAAVR), 1898–1929 (ELQAAVRIQSAFRMAQTQKQFRLFKTAALVIQ), 1948–1979 (LRNAALMLQSTWKGKIVRRQIRKQHKCAVIIQ), 1971–2002 (QHKCAVIIQSYYRMHVQQKKWDIMKKAARLIQ), 2021–2050 (TKAAIVIIQSAYRSMRVRKKIKEYNKAAVA), 2044–2075 (YNKAAVAIQSTYRAYKAKKNYATYRASAVLIQ), 2094–2125 (LKKTAVKIQAVFRGIRVRRRIQHMHTAATFIK), 2117–2148 (MHTAATFIKAMFKMHQAKVRYHKMRTAAVLIQ), 2167–2198 (ILKAVTVLQASFRGVRVRQTLRKMQNAAIRIQ), 2190–2219 (MQNAAIRIQSCYRRYRQQTYFNKLKKVTQT), 2240–2271 (LRHSAICIQAGFRGMKARRHLRMMHLAATLIQ), 2313–2344 (LQKAVITLQSSYRGWVVRKKMQEMHRAATVIQ), 2336–2367 (MHRAATVIQAAFRMHRAHVRYQAVRQASVVIQ), 2386–2417 (QRHSALILQAAFRSMKARRHLKMMHSSAVLIQ), 2409–2440 (MHSSAVLIQSRFRGLVVRKRFVSLKKAAVFVQ), 2459–2490 (VQKAVITIQSSYRRLMAKKKVQAMHRAAALIQ), 2532–2563 (QRHSALVIQAAYKGMKARQLLREKHRAAIIIQ), 2666–2697 (RTQAVICIQSSYRGFKVRKGIQRMHLAATLIQ), 2689–2720 (MHLAATLIQSLYRMHRAKLDYRAKKTAVVLIQ), 2739–2768 (LQKSVRIIQAAFRGMKVRQKLKNLSEAKMA), 2837–2866 (QKHAALRIQSFLQMAVYRRRFVQQKRAAVT), 2860–2891 (QKRAAVTLQQYFRTWQARKQFLLYRKAASVLQ), 2910–2939 (VRSSVIIIQARTRGFIQKRKFQKIKDSTIK), 2933–2964 (IKDSTIKIQAAWRSYKARKYLCKVKAACKIQA), 2955–2986 (KVKAACKIQAWYRSWKARKEYLAILKAVKVIQ), 3030–3059 (RHQAACLIQANFRRYKGRQVFLRQKSAALT), 3080–3111 (LKKSTVVLQALVRGWLVRKRISEQRTKIRLLH), 3182–3211 (QNRAASVIQKAVRRFLLRKKKEKINNGITK), and 3205–3236 (INNGITKIQALWRGYSWRKKNDGTKIKAIRLS).

The protein localises to the cytoplasm. The protein resides in the cytoskeleton. It is found in the spindle. Its subcellular location is the nucleus. Probable role in mitotic spindle regulation and coordination of mitotic processes. May have a preferential role in regulating neurogenesis. This chain is Abnormal spindle-like microcephaly-associated protein homolog (ASPM), found in Felis catus (Cat).